Here is a 440-residue protein sequence, read N- to C-terminus: Trigger factor (440 aa).

Positions 163-248 constitute a PPIase FKBP-type domain; that stretch reads GDILTVDFLG…AKALKRRVAP (86 aa).

The protein belongs to the FKBP-type PPIase family. Tig subfamily.

It localises to the cytoplasm. The catalysed reaction is [protein]-peptidylproline (omega=180) = [protein]-peptidylproline (omega=0). Involved in protein export. Acts as a chaperone by maintaining the newly synthesized protein in an open conformation. Functions as a peptidyl-prolyl cis-trans isomerase. This chain is Trigger factor, found in Acidiphilium cryptum (strain JF-5).